Consider the following 427-residue polypeptide: Trigger factor (427 aa).

A PPIase FKBP-type domain is found at 163-248 (GDTVVIDFVG…IHEVKAKEVP (86 aa)).

The protein belongs to the FKBP-type PPIase family. Tig subfamily.

The protein localises to the cytoplasm. The catalysed reaction is [protein]-peptidylproline (omega=180) = [protein]-peptidylproline (omega=0). In terms of biological role, involved in protein export. Acts as a chaperone by maintaining the newly synthesized protein in an open conformation. Functions as a peptidyl-prolyl cis-trans isomerase. This chain is Trigger factor, found in Streptococcus pneumoniae serotype 4 (strain ATCC BAA-334 / TIGR4).